Consider the following 115-residue polypeptide: Class I hydrophobin 21 (115 aa).

Positions 1–20 (MFAAPATMLVLAALAALSSA) are cleaved as a signal peptide. 4 disulfide bridges follow: cysteine 30/cysteine 93, cysteine 37/cysteine 87, cysteine 38/cysteine 77, and cysteine 94/cysteine 107.

The protein belongs to the fungal hydrophobin family. In terms of assembly, self-assembles to form functional amyloid fibrils called rodlets. Self-assembly into fibrillar rodlets occurs spontaneously at hydrophobic:hydrophilic interfaces and the rodlets further associate laterally to form amphipathic monolayers.

It localises to the secreted. It is found in the cell wall. Aerial growth, conidiation, and dispersal of filamentous fungi in the environment rely upon a capability of their secreting small amphipathic proteins called hydrophobins (HPBs) with low sequence identity. Class I can self-assemble into an outermost layer of rodlet bundles on aerial cell surfaces, conferring cellular hydrophobicity that supports fungal growth, development and dispersal; whereas Class II form highly ordered films at water-air interfaces through intermolecular interactions but contribute nothing to the rodlet structure. This is Class I hydrophobin 21 from Pleurotus ostreatus (strain PC15) (Oyster mushroom).